Reading from the N-terminus, the 760-residue chain is MRYNQFSYIPTSLERAAEELKELGFDLDLQKTAKANLESFLRKLFFHYPDSDYPLSHLIAKNDMDALSFFQSEQELSKEVFDLLALQVLGFIPGVDFTEADAFLDKLAFPIHFDETEIIKHIHHLLATRCKSGMTLIDDLVSQGMLTMDNDYHFFNGKSLATFDTSQLIREVVYVEAPLDTDQDGQLDLIKVNIIRPQSQKPLPTLMTPSPYHQGINEVANDKKLYRMEKELVVKKRRQITVEDRDFIPLETQPCKLPIGQNLESFSYINSYSLNDYFLARGFANIYVSGVGTAGSTGFMTSGDYAQIESFKAVIDWLNGRATAYTSHSKTHQVRADWANGLVCTTGKSYLGTMSTGLATTGVDGLAMIIAESAISSWYNYYRENGLVCSPGGYPGEDLDVLTELTYSRNLLAGDYLRHNDHYQELLNQQSQALDRQSGDYNQFWHDRNYLKNAHQIKCDVVYTHGLQDWNVKPRQVYEIFNALPSTINKHLFLHQGEHVYMHNWQSIDFRESMNALLCQKLLGLANDFSLPEMIWQDNTCPQNWQERKVFGTSTIKELDLGQELLLIDNHYGEDEFKAYGKDFRASKAALFKGKANQALIDILLEEDLPINGEIVLQLKVKSSENKGLLSAQILDYGKKKRLGDLPIALTQSSIDNGQNFSREPLKELPFREDSYRVISKGFMNLQNRNNLSSIETIPNNKWMTVRLPLQPTIYHLEKGDTLRVILYTTDFEHTVRDNSNYALTIDLSQSQLIVPIASN.

Catalysis depends on charge relay system residues Ser349, Asp469, and His499.

The protein belongs to the peptidase S15 family. Homodimer.

It localises to the cytoplasm. The catalysed reaction is Hydrolyzes Xaa-Pro-|- bonds to release unblocked, N-terminal dipeptides from substrates including Ala-Pro-|-p-nitroanilide and (sequentially) Tyr-Pro-|-Phe-Pro-|-Gly-Pro-|-Ile.. In terms of biological role, removes N-terminal dipeptides sequentially from polypeptides having unsubstituted N-termini provided that the penultimate residue is proline. The polypeptide is Xaa-Pro dipeptidyl-peptidase (Streptococcus pyogenes serotype M12 (strain MGAS9429)).